Reading from the N-terminus, the 398-residue chain is Succinate--CoA ligase [ADP-forming] subunit beta (398 aa).

The ATP-grasp domain maps to 9–254; it reads KALLKSYGAP…TTEEDEKEIE (246 aa). ATP contacts are provided by residues lysine 46, 53-55, glutamate 109, alanine 112, and glutamate 117; that span reads GRG. 2 residues coordinate Mg(2+): asparagine 209 and aspartate 223. Substrate contacts are provided by residues asparagine 274 and 331-333; that span reads GIM.

Belongs to the succinate/malate CoA ligase beta subunit family. As to quaternary structure, heterotetramer of two alpha and two beta subunits. Mg(2+) serves as cofactor.

The enzyme catalyses succinate + ATP + CoA = succinyl-CoA + ADP + phosphate. It carries out the reaction GTP + succinate + CoA = succinyl-CoA + GDP + phosphate. Its pathway is carbohydrate metabolism; tricarboxylic acid cycle; succinate from succinyl-CoA (ligase route): step 1/1. Its function is as follows. Succinyl-CoA synthetase functions in the citric acid cycle (TCA), coupling the hydrolysis of succinyl-CoA to the synthesis of either ATP or GTP and thus represents the only step of substrate-level phosphorylation in the TCA. The beta subunit provides nucleotide specificity of the enzyme and binds the substrate succinate, while the binding sites for coenzyme A and phosphate are found in the alpha subunit. This chain is Succinate--CoA ligase [ADP-forming] subunit beta, found in Sinorhizobium medicae (strain WSM419) (Ensifer medicae).